A 699-amino-acid chain; its full sequence is Chitin synthase 7 (699 aa).

Helical transmembrane passes span 19–39 (IVGV…AAFL), 58–80 (SVVV…VVTL), 98–118 (LQWF…LFCI), 445–465 (FMQN…LAII), 474–494 (LPVG…IYFG), and 507–527 (VMFV…IFTA). Residues 628–648 (AAGGSGEASEPGTRWAPDPRE) are disordered.

The protein belongs to the chitin synthase family. Class VI subfamily.

The protein resides in the cell membrane. It catalyses the reaction [(1-&gt;4)-N-acetyl-beta-D-glucosaminyl](n) + UDP-N-acetyl-alpha-D-glucosamine = [(1-&gt;4)-N-acetyl-beta-D-glucosaminyl](n+1) + UDP + H(+). In terms of biological role, polymerizes chitin, a structural polymer of the cell wall and septum, by transferring the sugar moiety of UDP-GlcNAc to the non-reducing end of the growing chitin polymer. Plays a role in cell wall integrity. Required to successfully penetrate the host plants and thus plays a key role in pathogenicity. The chain is Chitin synthase 7 from Verticillium dahliae (strain VdLs.17 / ATCC MYA-4575 / FGSC 10137) (Verticillium wilt).